A 475-amino-acid polypeptide reads, in one-letter code: Ankyrin repeat, SAM and basic leucine zipper domain-containing protein 1 (475 aa).

Residues M1 to W25 form a disordered region. 3 positions are modified to phosphoserine: S17, S18, and S20. 6 ANK repeats span residues E45 to T74, Y78 to F107, D110 to V144, R148 to T177, N181 to I210, and D214 to G243. An SAM domain is found at S272–E334.

In terms of assembly, interacts with DDX4, PIWIL1, RANBP9 and TDRD1.

The protein resides in the cytoplasm. Plays a central role during spermatogenesis by repressing transposable elements and preventing their mobilization, which is essential for the germline integrity. Acts via the piRNA metabolic process, which mediates the repression of transposable elements during meiosis by forming complexes composed of piRNAs and Piwi proteins and governs the methylation and subsequent repression of transposons. Its association with pi-bodies suggests a participation in the primary piRNAs metabolic process. Required prior to the pachytene stage to facilitate the production of multiple types of piRNAs, including those associated with repeats involved in the regulation of retrotransposons. May act by mediating protein-protein interactions during germ cell maturation. The polypeptide is Ankyrin repeat, SAM and basic leucine zipper domain-containing protein 1 (ASZ1) (Bos taurus (Bovine)).